We begin with the raw amino-acid sequence, 389 residues long: Probable peptide chain release factor 1, mitochondrial (389 aa).

N5-methylglutamine is present on Gln259.

Belongs to the prokaryotic/mitochondrial release factor family. In terms of processing, methylation of glutamine in the GGQ triplet is conserved from bacteria to mammals.

Its subcellular location is the mitochondrion. Its function is as follows. Mitochondrial peptide chain release factor that directs the termination of translation in response to the peptide chain termination codons UAA and UAG. This chain is Probable peptide chain release factor 1, mitochondrial, found in Caenorhabditis elegans.